The chain runs to 137 residues: Protein PsiE homolog (137 aa).

4 helical membrane passes run 13–35 (ILLR…AFLI), 55–77 (YYMT…IVKY), 84–103 (FPLR…FIIV), and 107–129 (SATS…FLAN).

It belongs to the PsiE family.

Its subcellular location is the cell membrane. This Listeria monocytogenes serotype 4b (strain F2365) protein is Protein PsiE homolog.